Reading from the N-terminus, the 41-residue chain is Conotoxin Ac4.2 (41 aa).

Positions 1-11 (FDGRNAAVNER) are excised as a propeptide. Pro-13 bears the 4-hydroxyproline mark. Residues Thr-18 and Thr-20 are each glycosylated (O-linked (HexNAc...) threonine). 2 positions are modified to 4-hydroxyproline: Pro-29 and Pro-33. Cys-40 is modified (cysteine amide).

The protein belongs to the conotoxin A superfamily. Contains 3 disulfide bonds. In terms of tissue distribution, expressed by the venom duct.

The protein resides in the secreted. Probable neurotoxin with ion channel inhibitor activity. This is Conotoxin Ac4.2 from Conus achatinus (Little frog cone).